The following is a 513-amino-acid chain: ATP synthase subunit alpha (513 aa).

169-176 (GDRKTGKS) serves as a coordination point for ATP.

This sequence belongs to the ATPase alpha/beta chains family. As to quaternary structure, F-type ATPases have 2 components, CF(1) - the catalytic core - and CF(0) - the membrane proton channel. CF(1) has five subunits: alpha(3), beta(3), gamma(1), delta(1), epsilon(1). CF(0) has three main subunits: a(1), b(2) and c(9-12). The alpha and beta chains form an alternating ring which encloses part of the gamma chain. CF(1) is attached to CF(0) by a central stalk formed by the gamma and epsilon chains, while a peripheral stalk is formed by the delta and b chains.

The protein resides in the cell membrane. The enzyme catalyses ATP + H2O + 4 H(+)(in) = ADP + phosphate + 5 H(+)(out). Its function is as follows. Produces ATP from ADP in the presence of a proton gradient across the membrane. The alpha chain is a regulatory subunit. The polypeptide is ATP synthase subunit alpha (Levilactobacillus brevis (strain ATCC 367 / BCRC 12310 / CIP 105137 / JCM 1170 / LMG 11437 / NCIMB 947 / NCTC 947) (Lactobacillus brevis)).